The primary structure comprises 337 residues: Molybdate import system permease protein MolB (337 aa).

At 1 to 5 (MQPDS) the chain is on the cytoplasmic side. The chain crosses the membrane as a helical span at residues 6 to 25 (YPKILFGLTLLLVITAVISL). Topologically, residues 26-51 (GIGRYSLSVPQIGQILWAKATALEID) are periplasmic. Residues 52–87 (PVQQQVIFQVRLPRILTALCVGAGLALSGVVLQGIF) traverse the membrane as a helical segment. The Cytoplasmic portion of the chain corresponds to 88–98 (RNPLVNPHIIG). A helical membrane pass occupies residues 99–113 (VTSGSAFGGTLAIFF). Residues 114 to 116 (GFS) lie on the Periplasmic side of the membrane. A helical transmembrane segment spans residues 117-140 (LYGLFTSTILFGFGTLALVFLFSF). Residues 141 to 146 (KFNQRS) are Cytoplasmic-facing. A helical membrane pass occupies residues 147-171 (LLMLILIGMILSGLFSALVSLLQYI). Topologically, residues 172 to 193 (SDTEEKLPSIVFWLMGSFATSN) are periplasmic. The helical transmembrane segment at 194 to 214 (WEKLLFFFVPFLLCSSILLSL) threads the bilayer. Residues 215-234 (SWRLNLLSLDEKEAKALGVK) are Cytoplasmic-facing. The chain crosses the membrane as a helical span at residues 235–257 (MAPLRWLVIFLSGSLVACQVAIS). Over 258 to 264 (GSIGWVG) the chain is Periplasmic. The chain crosses the membrane as a helical span at residues 265 to 275 (LIIPHLSRMLV). The Cytoplasmic portion of the chain corresponds to 276-278 (GAN). Residues 279–304 (HQSLLPCTMLVGATYMLLVDNVARSL) form a helical membrane-spanning segment. Topologically, residues 305 to 310 (SDAEIP) are periplasmic. The chain crosses the membrane as a helical span at residues 311 to 329 (ISILTALIGAPLFGVLVYK). At 330–337 (LKRGGMNE) the chain is on the cytoplasmic side.

This sequence belongs to the binding-protein-dependent transport system permease family. FecCD subfamily. In terms of assembly, the complex is composed of two ATP-binding proteins (MolC), two transmembrane proteins (MolB) and a solute-binding protein (MolA).

Its subcellular location is the cell inner membrane. Its activity is regulated as follows. The MolBCA complex shows a decrease in affinity in the presence of increasing concentrations of substrate and nucleotide. In terms of biological role, part of the ABC transporter complex MolBCA involved in molybdate import. Responsible for the translocation of the substrate across the membrane. Functions as a low-affinity molybdate transporter. The protein is Molybdate import system permease protein MolB of Haemophilus influenzae (strain ATCC 51907 / DSM 11121 / KW20 / Rd).